The primary structure comprises 184 residues: dCTP deaminase (184 aa).

Position 107–112 (107–112 (KSTYAR)) interacts with dCTP. Catalysis depends on E133, which acts as the Proton donor/acceptor. DCTP is bound by residues Q152, Y166, and Q176.

Belongs to the dCTP deaminase family. Homotrimer.

The enzyme catalyses dCTP + H2O + H(+) = dUTP + NH4(+). It participates in pyrimidine metabolism; dUMP biosynthesis; dUMP from dCTP (dUTP route): step 1/2. Catalyzes the deamination of dCTP to dUTP. This Herpetosiphon aurantiacus (strain ATCC 23779 / DSM 785 / 114-95) protein is dCTP deaminase.